Reading from the N-terminus, the 211-residue chain is Transmembrane protein 247 (211 aa).

Composition is skewed to basic and acidic residues over residues 1-10 and 31-45; these read MAMEDREVME and PEGKPKASLDAEVPK. The disordered stretch occupies residues 1-90; that stretch reads MAMEDREVME…AGDGPGLESV (90 aa). Residues 63 to 73 show a composition bias toward pro residues; the sequence is PGPPRSLPPKS. Residues 119–148 adopt a coiled-coil conformation; the sequence is KYLHQENERQRQHEEVMEQLQQQQQQQQAL. 2 helical membrane passes run 159 to 179 and 186 to 206; these read LLLPQNQFAMFFYCFIFIHII and VFFLFSKHYLFCLAAILLCLI.

The protein resides in the membrane. The chain is Transmembrane protein 247 (Tmem247) from Mus musculus (Mouse).